Here is a 369-residue protein sequence, read N- to C-terminus: uncharacterized protein (369 aa).

Belongs to the Gfo/Idh/MocA family.

This is an uncharacterized protein from Schizosaccharomyces pombe (strain 972 / ATCC 24843) (Fission yeast).